A 188-amino-acid polypeptide reads, in one-letter code: Small ribosomal subunit protein eS8 (188 aa).

The segment at 1–34 is disordered; it reads MGISRDSRHKRRLTGGRYPVHKKKRKYELGRPSS. Over residues 7–26 the composition is skewed to basic residues; the sequence is SRHKRRLTGGRYPVHKKKRK.

The protein belongs to the eukaryotic ribosomal protein eS8 family.

This chain is Small ribosomal subunit protein eS8 (RPS8), found in Theileria parva (East coast fever infection agent).